Reading from the N-terminus, the 301-residue chain is Hepatitis A virus cellular receptor 2 (301 aa).

Residues 1-21 form the signal peptide; the sequence is MFSHLPFDCVLLLLLLLLTRS. Residues 22 to 124 enclose the Ig-like V-type domain; that stretch reads SEVEYRAEVG…PGIMNDEKFN (103 aa). Residues 22–202 are Extracellular-facing; the sequence is SEVEYRAEVG…RDSGATIRIG (181 aa). 3 disulfides stabilise this stretch: cysteine 38/cysteine 110, cysteine 52/cysteine 63, and cysteine 58/cysteine 109. Arginine 111 is an a 1,2-diacyl-sn-glycero-3-phospho-L-serine binding site. A Ca(2+)-binding site is contributed by glycine 116. Residue methionine 118 participates in a 1,2-diacyl-sn-glycero-3-phospho-L-serine binding. Asparagine 119 is a binding site for Ca(2+). Threonine 145 is a glycosylation site (O-linked (GalNAc...) threonine). N-linked (GlcNAc...) asparagine glycosylation is present at asparagine 172. Residues 203–223 traverse the membrane as a helical segment; it reads IYIGAGICAGLALALIFGALI. At 224–301 the chain is on the cytoplasmic side; it reads FKWYSHSKEK…QPLGCRFAMP (78 aa). Phosphotyrosine; by ITK is present on tyrosine 265. Cysteine 296 carries S-palmitoyl cysteine lipidation.

The protein belongs to the immunoglobulin superfamily. TIM family. In terms of assembly, interacts with HMGB1; impairs HMGB1 binding to B-DNA and likely HMGB1-mediated innate immune response. Interacts with BAG6. Interacts (phosphorylated) with PIK3R1 and PIK3R2. Interacts (not dependent on its phosphorylation status) with FYN. Interacts (in basal state T-cells) with VAV1; AKT1/2, LCP2, ZAP70, SYK, PIK3R1, FYN, SH3BP2 and SH2D2A. Interacts (in activated T-cells) with LCK and PLCG. Interacts with ILF3; this interaction promotes ILF3 ubiquitination and degradation. O-glycosylated with core 1 or possibly core 8 glycans. In terms of processing, phosphorylated on tyrosine residues; modestly increased after TCR/CD28 stimulation. Can be phosphorylated in the cytoplasmic domain by FYN. Phosphorylation at Tyr-265 is increased by stimulation with ligand LGALS9. Post-translationally, palmitoylated by ZDHHC9 at Cys-296; palmitoylation stabilizes HAVCR2 by preventing binding to E3 ubiquitin ligase SYVN1, thereby suppressing its polyubiquitination and degradation. Ubiquitinated by SYVN1, leading to polyubiquitination and proteasomal degradation. As to expression, expressed in T-helper type 1 (Th1) lymphocytes. Expressed on regulatory T (Treg) cells after TCR stimulation. Expressed in dendritic cells and natural killer (NK) cells. Expressed in epithelial tissues. Expression is increased on CD4+ and CD8+ T-cells in chronic hepatitis C virus (HCV) infection. In progressive HIV-1 infection, expression is up-regulated on HIV-1-specific CD8 T-cells.

It is found in the cell membrane. The protein resides in the cell junction. Its function is as follows. Cell surface receptor implicated in modulating innate and adaptive immune responses. Generally accepted to have an inhibiting function. Reports on stimulating functions suggest that the activity may be influenced by the cellular context and/or the respective ligand. Regulates macrophage activation. Inhibits T-helper type 1 lymphocyte (Th1)-mediated auto- and alloimmune responses and promotes immunological tolerance. In CD8+ cells attenuates TCR-induced signaling, specifically by blocking NF-kappaB and NFAT promoter activities resulting in the loss of IL-2 secretion. The function may implicate its association with LCK proposed to impair phosphorylation of TCR subunits, and/or LGALS9-dependent recruitment of PTPRC to the immunological synapse. In contrast, shown to activate TCR-induced signaling in T-cells probably implicating ZAP70, LCP2, LCK and FYN. Expressed on Treg cells can inhibit Th17 cell responses. Receptor for LGALS9. Binding to LGALS9 is believed to result in suppression of T-cell responses; the resulting apoptosis of antigen-specific cells may implicate HAVCR2 phosphorylation and disruption of its association with BAG6. Binding to LGALS9 is proposed to be involved in innate immune response to intracellular pathogens. Expressed on Th1 cells interacts with LGALS9 expressed on Mycobacterium tuberculosis-infected macrophages to stimulate antibactericidal activity including IL-1 beta secretion and to restrict intracellular bacterial growth. However, the function as receptor for LGALS9 has been challenged. Also reported to enhance CD8+ T-cell responses to an acute infection such as by Listeria monocytogenes. Receptor for phosphatidylserine (PtSer); PtSer-binding is calcium-dependent. May recognize PtSer on apoptotic cells leading to their phagocytosis. Mediates the engulfment of apoptotic cells by dendritic cells. Expressed on T-cells, promotes conjugation but not engulfment of apoptotic cells. Expressed on dendritic cells (DCs) positively regulates innate immune response and in synergy with Toll-like receptors promotes secretion of TNF-alpha. In tumor-imfiltrating DCs suppresses nucleic acid-mediated innate immune repsonse by interaction with HMGB1 and interfering with nucleic acid-sensing and trafficking of nucleid acids to endosomes. Expressed on natural killer (NK) cells acts as a coreceptor to enhance IFN-gamma production in response to LGALS9. In contrast, shown to suppress NK cell-mediated cytotoxicity. Negatively regulates NK cell function in LPS-induced endotoxic shock. The sequence is that of Hepatitis A virus cellular receptor 2 (HAVCR2) from Homo sapiens (Human).